Here is a 376-residue protein sequence, read N- to C-terminus: 1-acyl-sn-glycerol-3-phosphate acyltransferase 3 (376 aa).

2 consecutive transmembrane segments (helical) span residues 14-34 and 49-69; these read VLFL…FIIV and VAEL…CIKI. An HXXXXD motif motif is present at residues 92–97; it reads HRSDID. Transmembrane regions (helical) follow at residues 98–118, 306–326, and 335–355; these read WLIG…LAIM, LIVV…LLQW, and IILL…ILIQ.

The protein belongs to the 1-acyl-sn-glycerol-3-phosphate acyltransferase family. Predominantly expressed in pollen.

The protein localises to the membrane. The catalysed reaction is a 1-acyl-sn-glycero-3-phosphate + an acyl-CoA = a 1,2-diacyl-sn-glycero-3-phosphate + CoA. Its pathway is phospholipid metabolism; CDP-diacylglycerol biosynthesis; CDP-diacylglycerol from sn-glycerol 3-phosphate: step 2/3. In terms of biological role, converts lysophosphatidic acid (LPA) into phosphatidic acid by incorporating acyl moiety at the 2 position. Has preference for C-18-CoA substrates compared to C-16-CoA substrates. This chain is 1-acyl-sn-glycerol-3-phosphate acyltransferase 3 (LPAT3), found in Arabidopsis thaliana (Mouse-ear cress).